Here is a 146-residue protein sequence, read N- to C-terminus: NADH-quinone oxidoreductase subunit A (146 aa).

3 consecutive transmembrane segments (helical) span residues 8–28 (FGSVFVFLLLGVIFVVGGYLT), 63–83 (FYVVALIFIIFDVEVVFLYPW), and 93–113 (FALIEVLVFAGILILGLAYAW).

It belongs to the complex I subunit 3 family. NDH-1 is composed of 14 different subunits. Subunits NuoA, H, J, K, L, M, N constitute the membrane sector of the complex.

It is found in the cell inner membrane. It carries out the reaction a quinone + NADH + 5 H(+)(in) = a quinol + NAD(+) + 4 H(+)(out). Its function is as follows. NDH-1 shuttles electrons from NADH, via FMN and iron-sulfur (Fe-S) centers, to quinones in the respiratory chain. The immediate electron acceptor for the enzyme in this species is believed to be a menaquinone. Couples the redox reaction to proton translocation (for every two electrons transferred, four hydrogen ions are translocated across the cytoplasmic membrane), and thus conserves the redox energy in a proton gradient. The chain is NADH-quinone oxidoreductase subunit A from Chlorobium chlorochromatii (strain CaD3).